We begin with the raw amino-acid sequence, 347 residues long: Holliday junction branch migration complex subunit RuvB (347 aa).

The large ATPase domain (RuvB-L) stretch occupies residues 1 to 186 (MKDENSINFL…FGITARFELY (186 aa)). ATP contacts are provided by residues Leu25, Arg26, Gly67, Lys70, Thr71, Thr72, 133–135 (EDY), Arg176, Tyr186, and Arg223. Thr71 is a Mg(2+) binding site. The segment at 187 to 257 (SEIELVEIIK…IVSIGLEMLR (71 aa)) is small ATPAse domain (RuvB-S). Residues 260 to 347 (GEGLDEQDRN…DISENQRVSF (88 aa)) are head domain (RuvB-H). Residues Arg315 and Arg320 each contribute to the DNA site.

It belongs to the RuvB family. In terms of assembly, homohexamer. Forms an RuvA(8)-RuvB(12)-Holliday junction (HJ) complex. HJ DNA is sandwiched between 2 RuvA tetramers; dsDNA enters through RuvA and exits via RuvB. An RuvB hexamer assembles on each DNA strand where it exits the tetramer. Each RuvB hexamer is contacted by two RuvA subunits (via domain III) on 2 adjacent RuvB subunits; this complex drives branch migration. In the full resolvosome a probable DNA-RuvA(4)-RuvB(12)-RuvC(2) complex forms which resolves the HJ.

The protein resides in the cytoplasm. It carries out the reaction ATP + H2O = ADP + phosphate + H(+). The RuvA-RuvB-RuvC complex processes Holliday junction (HJ) DNA during genetic recombination and DNA repair, while the RuvA-RuvB complex plays an important role in the rescue of blocked DNA replication forks via replication fork reversal (RFR). RuvA specifically binds to HJ cruciform DNA, conferring on it an open structure. The RuvB hexamer acts as an ATP-dependent pump, pulling dsDNA into and through the RuvAB complex. RuvB forms 2 homohexamers on either side of HJ DNA bound by 1 or 2 RuvA tetramers; 4 subunits per hexamer contact DNA at a time. Coordinated motions by a converter formed by DNA-disengaged RuvB subunits stimulates ATP hydrolysis and nucleotide exchange. Immobilization of the converter enables RuvB to convert the ATP-contained energy into a lever motion, pulling 2 nucleotides of DNA out of the RuvA tetramer per ATP hydrolyzed, thus driving DNA branch migration. The RuvB motors rotate together with the DNA substrate, which together with the progressing nucleotide cycle form the mechanistic basis for DNA recombination by continuous HJ branch migration. Branch migration allows RuvC to scan DNA until it finds its consensus sequence, where it cleaves and resolves cruciform DNA. The protein is Holliday junction branch migration complex subunit RuvB of Borrelia garinii subsp. bavariensis (strain ATCC BAA-2496 / DSM 23469 / PBi) (Borreliella bavariensis).